The following is an 80-amino-acid chain: uncharacterized protein (80 aa).

The N-terminal stretch at 1 to 23 is a signal peptide; the sequence is MKWNNMLKAAGIAVLLFSVFAYA.

This is an uncharacterized protein from Bacillus subtilis (strain 168).